Consider the following 478-residue polypeptide: Lysine histidine transporter-like 7 (478 aa).

Over 1–63 the chain is Cytoplasmic; sequence MSIALGNLFD…ITESRKGNVY (63 aa). The disordered stretch occupies residues 15–45; that stretch reads ESGGSPLFMSPAPSTDPQPISGEKNGGDGGR. The helical transmembrane segment at 64–86 threads the bilayer; sequence TATFHLLCSGIGLQVILLPAAFA. The Extracellular segment spans residues 87–89; it reads ALG. The chain crosses the membrane as a helical span at residues 90-112; the sequence is WVWGTIILTVGFVWKLYTTWLLV. Residues 113–140 are Cytoplasmic-facing; that stretch reads QLHEAVPGIRISRYVRLAIASFGVKLGK. A helical membrane pass occupies residues 141-161; that stretch reads LLGIFPVMYLSGGACTILVIT. The Extracellular portion of the chain corresponds to 162 to 177; it reads GGKSIQQLLQIMSDDN. A helical transmembrane segment spans residues 178-198; sequence TAPLTSVQCFLVFSCIAMIMS. Residues 199–205 lie on the Cytoplasmic side of the membrane; that stretch reads QFPNLNS. The chain crosses the membrane as a helical span at residues 206–226; sequence LFGVSLIGAFMGIAYCTVIWI. Topologically, residues 227-241 are extracellular; it reads LPVASDSQRTQVSVS. The chain crosses the membrane as a helical span at residues 242–262; the sequence is YATMDKSFVHIFNAIGLIALV. Residues 263–291 are Cytoplasmic-facing; the sequence is YRGNNLVLEIQGTLPSDSKNPSCKTMWRA. A helical transmembrane segment spans residues 292–312; that stretch reads VMISHALVAICMFPLTFAVYW. The Extracellular portion of the chain corresponds to 313–340; sequence AYGDKIPATGGPVGNYLKLYTQEHSKRA. A helical transmembrane segment spans residues 341–361; that stretch reads ACFIHLTFIFSCLCSYPINLM. The Cytoplasmic portion of the chain corresponds to 362–379; sequence PACDNIEMVYITKKKKPA. A helical membrane pass occupies residues 380 to 402; it reads SIIVRMMLRVFLSLVCFTIAVGF. Over 403–406 the chain is Extracellular; that stretch reads PFLP. A helical membrane pass occupies residues 407–429; the sequence is YLAVLIGAIALLVTFTYPCFMWI. At 430 to 439 the chain is on the cytoplasmic side; it reads SIKKPQRKSP. Residues 440–460 traverse the membrane as a helical segment; the sequence is MWLFNVLVGCLGASLSVLLLV. At 461-478 the chain is on the extracellular side; the sequence is ASAMRLAQKGLHANFFRP.

It belongs to the amino acid/polyamine transporter 2 family. Amino acid/auxin permease (AAAP) (TC 2.A.18.2) subfamily.

It localises to the cell membrane. Amino acid transporter. The polypeptide is Lysine histidine transporter-like 7 (Arabidopsis thaliana (Mouse-ear cress)).